A 192-amino-acid chain; its full sequence is Peptidyl-tRNA hydrolase (192 aa).

Tyrosine 17 lines the tRNA pocket. The active-site Proton acceptor is the histidine 22. The tRNA site is built by tyrosine 68, asparagine 70, and asparagine 116.

This sequence belongs to the PTH family. In terms of assembly, monomer.

It is found in the cytoplasm. The enzyme catalyses an N-acyl-L-alpha-aminoacyl-tRNA + H2O = an N-acyl-L-amino acid + a tRNA + H(+). Hydrolyzes ribosome-free peptidyl-tRNAs (with 1 or more amino acids incorporated), which drop off the ribosome during protein synthesis, or as a result of ribosome stalling. Functionally, catalyzes the release of premature peptidyl moieties from peptidyl-tRNA molecules trapped in stalled 50S ribosomal subunits, and thus maintains levels of free tRNAs and 50S ribosomes. This Mycolicibacterium gilvum (strain PYR-GCK) (Mycobacterium gilvum (strain PYR-GCK)) protein is Peptidyl-tRNA hydrolase.